Consider the following 1047-residue polypeptide: [F-actin]-monooxygenase MICAL1 (1047 aa).

Positions 1–489 (MASPTSTNPA…QDLYDIMDKE (489 aa)) are monooxygenase domain. Residues Cys-95, 114 to 116 (EKR), 121 to 123 (RHN), Phe-181, Tyr-293, and Asp-393 each bind FAD. Thr-475 carries the phosphothreonine modification. Positions 507 to 611 (SAGTEELLHW…YLSHFHSAFK (105 aa)) constitute a Calponin-homology (CH) domain. Ser-616 is subject to Phosphoserine. The interval 644-672 (RTKVEEETPCTEEPPVSEPSVPPALPSEH) is disordered. Residues 659–668 (VSEPSVPPAL) show a composition bias toward pro residues. The LIM zinc-binding domain maps to 679 to 741 (DVCELCGKRL…LQHLPQEDQK (63 aa)). Residues Cys-681, Cys-684, His-702, Cys-705, Cys-708, Cys-711, Cys-731, and His-734 each coordinate Zn(2+). Disordered regions lie at residues 739–787 (DQKE…QPAR) and 849–872 (EKGEEEEEEEEEEEEEEEELPPPL). Residues 745-767 (NNGSPENQELPTPGDSTTQSGPS) are compositionally biased toward polar residues. Residues Ser-777 and Ser-781 each carry the phosphoserine modification. The span at 851–868 (GEEEEEEEEEEEEEEEEL) shows a compositional bias: acidic residues. The bMERB domain occupies 905–1047 (KEEEMKRFCK…EERRLREMPV (143 aa)). Residues 912–996 (FCKAQAIQRR…LEEKQRQLDH (85 aa)) are a coiled coil.

It belongs to the Mical family. In terms of assembly, interacts with STK38 and STK38L. Associates with the SH3 domain of NEDD9. Interacts with VIM and PLXNA3. Interacts with RAB1B, RAB8A, RAB10, RAB13 and RAB15 (in their GTP-bound forms); binding to RAB1B is of low affinity compared to other Rab proteins; at least in case of RAB8A and RAB10 can bind 2 molecules of the Rab proteins simultaneously. Interacts with GRAF1/ARHGAP26, GRAF2/ARHGAP10, RAB8A, RAB8B and RAB10; may bind simultaneously to GRAFs and Rabs and connects GRAFs to Rabs. Does not interact with RAB1 and RAB11A. FAD serves as cofactor.

It localises to the cytoplasm. The protein localises to the cytoskeleton. The protein resides in the endosome membrane. Its subcellular location is the midbody. It carries out the reaction L-methionyl-[F-actin] + NADPH + O2 + H(+) = L-methionyl-(R)-S-oxide-[F-actin] + NADP(+) + H2O. It catalyses the reaction NADPH + O2 + H(+) = H2O2 + NADP(+). In terms of biological role, monooxygenase that promotes depolymerization of F-actin by mediating oxidation of specific methionine residues on actin to form methionine-sulfoxide, resulting in actin filament disassembly and preventing repolymerization. In the absence of actin, it also functions as a NADPH oxidase producing H(2)O(2). Acts as a cytoskeletal regulator that connects NEDD9 to intermediate filaments. Also acts as a negative regulator of apoptosis via its interaction with STK38 and STK38L; acts by antagonizing STK38 and STK38L activation by MST1/STK4. Involved in regulation of lamina-specific connectivity in the nervous system such as the development of lamina-restricted hippocampal connections. Through redox regulation of the actin cytoskeleton controls the intracellular distribution of secretory vesicles containing L1/neurofascin/NgCAM family proteins in neurons, thereby regulating their cell surface levels. May act as Rab effector protein and play a role in vesicle trafficking. Promotes endosomal tubule extension by associating with RAB8 (RAB8A or RAB8B), RAB10 and GRAF (GRAF1/ARHGAP26 or GRAF2/ARHGAP10) on the endosomal membrane which may connect GRAFs to Rabs, thereby participating in neosynthesized Rab8-Rab10-Rab11-dependent protein export. In Rattus norvegicus (Rat), this protein is [F-actin]-monooxygenase MICAL1 (Mical1).